The chain runs to 774 residues: 5-methyltetrahydropteroyltriglutamate--homocysteine methyltransferase (774 aa).

Residues 15–18 and Lys116 each bind 5-methyltetrahydropteroyltri-L-glutamate; that span reads RELK. Residues 445 to 447 and Glu498 contribute to the L-homocysteine site; that span reads IGS. L-methionine contacts are provided by residues 445–447 and Glu498; that span reads IGS. 5-methyltetrahydropteroyltri-L-glutamate is bound by residues 529-530 and Trp575; that span reads RC. Asp613 is a binding site for L-homocysteine. Residue Asp613 coordinates L-methionine. Position 619 (Glu619) interacts with 5-methyltetrahydropteroyltri-L-glutamate. Residues His655, Cys657, and Glu679 each coordinate Zn(2+). Catalysis depends on His708, which acts as the Proton donor. Cys740 provides a ligand contact to Zn(2+).

This sequence belongs to the vitamin-B12 independent methionine synthase family. Zn(2+) is required as a cofactor.

The enzyme catalyses 5-methyltetrahydropteroyltri-L-glutamate + L-homocysteine = tetrahydropteroyltri-L-glutamate + L-methionine. Its pathway is amino-acid biosynthesis; L-methionine biosynthesis via de novo pathway; L-methionine from L-homocysteine (MetE route): step 1/1. Catalyzes the transfer of a methyl group from 5-methyltetrahydrofolate to homocysteine resulting in methionine formation. In Flavobacterium johnsoniae (strain ATCC 17061 / DSM 2064 / JCM 8514 / BCRC 14874 / CCUG 350202 / NBRC 14942 / NCIMB 11054 / UW101) (Cytophaga johnsonae), this protein is 5-methyltetrahydropteroyltriglutamate--homocysteine methyltransferase.